The following is a 150-amino-acid chain: UPF0756 membrane protein ABAYE1440 (150 aa).

4 consecutive transmembrane segments (helical) span residues 1 to 21 (MLAQFDVNLVVLLVLLICGLL), 45 to 65 (FFPYIQAHGLNLGILILTIGV), 83 to 103 (FISFKSLVAIAIGLLVAWLGG), and 115 to 135 (VVAGLLIGTVAGVALLRGVPV).

This sequence belongs to the UPF0756 family.

It localises to the cell membrane. The protein is UPF0756 membrane protein ABAYE1440 of Acinetobacter baumannii (strain AYE).